A 391-amino-acid chain; its full sequence is ATP phosphoribosyltransferase regulatory subunit (391 aa).

This sequence belongs to the class-II aminoacyl-tRNA synthetase family. HisZ subfamily. As to quaternary structure, heteromultimer composed of HisG and HisZ subunits.

The protein localises to the cytoplasm. Its pathway is amino-acid biosynthesis; L-histidine biosynthesis; L-histidine from 5-phospho-alpha-D-ribose 1-diphosphate: step 1/9. In terms of biological role, required for the first step of histidine biosynthesis. May allow the feedback regulation of ATP phosphoribosyltransferase activity by histidine. The protein is ATP phosphoribosyltransferase regulatory subunit of Prochlorococcus marinus (strain NATL1A).